The chain runs to 275 residues: Membrane protein insertase YidC 2 (275 aa).

Positions 1 to 21 (MKKKNIILISVLLGALLLLTG) are cleaved as a signal peptide. A lipid anchor (N-palmitoyl cysteine) is attached at cysteine 22. Residue cysteine 22 is the site of S-diacylglycerol cysteine attachment. The next 4 helical transmembrane spans lie at 48–68 (FVAK…TLLI), 133–153 (QMGC…YYAI), 174–194 (MVLA…SMIG), and 212–232 (IMIL…WAVG).

It belongs to the OXA1/ALB3/YidC family. Type 2 subfamily.

The protein localises to the cell membrane. Its function is as follows. Required for the insertion and/or proper folding and/or complex formation of integral membrane proteins into the membrane. Involved in integration of membrane proteins that insert both dependently and independently of the Sec translocase complex, as well as at least some lipoproteins. In Listeria monocytogenes serotype 4b (strain F2365), this protein is Membrane protein insertase YidC 2.